Consider the following 244-residue polypeptide: Chlorosome protein I (244 aa).

The region spanning 1–95 is the 2Fe-2S ferredoxin-type domain; sequence MNLIINDKTA…TVKVLSRPEE (95 aa). Cys-33, Cys-39, Cys-42, and Cys-77 together coordinate [2Fe-2S] cluster.

It depends on [2Fe-2S] cluster as a cofactor.

The protein resides in the chlorosome. Could play a direct role in the oxidation or reduction of the quenching species formed in the chlorosome. This is Chlorosome protein I (csmI) from Chlorobaculum tepidum (strain ATCC 49652 / DSM 12025 / NBRC 103806 / TLS) (Chlorobium tepidum).